The primary structure comprises 545 residues: Myotubularin-related protein 9 (545 aa).

Met1 is subject to N-acetylmethionine. The region spanning 4 to 99 (AELIKTPRVD…LNIASSIEAL (96 aa)) is the GRAM domain. The Myotubularin phosphatase domain maps to 123–498 (GWHSFLPEQE…QSLQLWEGIF (376 aa)). Residues 508-542 (LDEAYEEMVNIIEYNKELQAKVNVLRRQLAELETE) adopt a coiled-coil conformation.

Belongs to the protein-tyrosine phosphatase family. Non-receptor class myotubularin subfamily. Homodimer. Heterodimer (via C-terminus) with lipid phosphatase MTMR6 (via C-terminus). Heterodimer (via coiled coil domain) with lipid phosphatase MTMR7 (via C-terminus).

The protein resides in the cytoplasm. It is found in the cell projection. The protein localises to the ruffle membrane. Its subcellular location is the perinuclear region. It localises to the endoplasmic reticulum. Functionally, acts as an adapter for myotubularin-related phosphatases. Increases lipid phosphatase MTMR6 catalytic activity, specifically towards phosphatidylinositol 3,5-bisphosphate, and MTMR6 binding affinity for phosphorylated phosphatidylinositols. Positively regulates lipid phosphatase MTMR7 catalytic activity. The formation of the MTMR6-MTMR9 complex, stabilizes both MTMR6 and MTMR9 protein levels. Plays a role in the late stages of macropinocytosis possibly by regulating MTMR6-mediated dephosphorylation of phosphatidylinositol 3-phosphate in membrane ruffles. Negatively regulates DNA damage-induced apoptosis, in part via its association with MTMR6. Does not bind mono-, di- and tri-phosphorylated phosphatidylinositols, phosphatidic acid and phosphatidylserine. This chain is Myotubularin-related protein 9 (Mtmr9), found in Mus musculus (Mouse).